Reading from the N-terminus, the 157-residue chain is 2-C-methyl-D-erythritol 2,4-cyclodiphosphate synthase (157 aa).

2 residues coordinate a divalent metal cation: Asp8 and His10. 4-CDP-2-C-methyl-D-erythritol 2-phosphate is bound by residues 8–10 (DVH) and 34–35 (HS). An a divalent metal cation-binding site is contributed by His42. Residues 56–58 (DIG), 61–65 (FPDNE), 132–135 (TTTE), Phe139, and Arg142 each bind 4-CDP-2-C-methyl-D-erythritol 2-phosphate.

The protein belongs to the IspF family. In terms of assembly, homotrimer. A divalent metal cation serves as cofactor.

It carries out the reaction 4-CDP-2-C-methyl-D-erythritol 2-phosphate = 2-C-methyl-D-erythritol 2,4-cyclic diphosphate + CMP. It participates in isoprenoid biosynthesis; isopentenyl diphosphate biosynthesis via DXP pathway; isopentenyl diphosphate from 1-deoxy-D-xylulose 5-phosphate: step 4/6. In terms of biological role, involved in the biosynthesis of isopentenyl diphosphate (IPP) and dimethylallyl diphosphate (DMAPP), two major building blocks of isoprenoid compounds. Catalyzes the conversion of 4-diphosphocytidyl-2-C-methyl-D-erythritol 2-phosphate (CDP-ME2P) to 2-C-methyl-D-erythritol 2,4-cyclodiphosphate (ME-CPP) with a corresponding release of cytidine 5-monophosphate (CMP). The polypeptide is 2-C-methyl-D-erythritol 2,4-cyclodiphosphate synthase (Desulforamulus reducens (strain ATCC BAA-1160 / DSM 100696 / MI-1) (Desulfotomaculum reducens)).